The chain runs to 775 residues: Armadillo-like helical domain-containing protein 4 (775 aa).

Residues Met-1–Ala-47 form the signal peptide. Topologically, residues Phe-48–Met-715 are extracellular. N-linked (GlcNAc...) asparagine glycosylation occurs at Asn-76. 3 disordered regions span residues Ala-120 to Ser-148, Val-247 to Ser-273, and Lys-324 to Thr-366. Polar residues predominate over residues Gly-129 to Glu-142. The segment covering Lys-324–Glu-335 has biased composition (basic and acidic residues). N-linked (GlcNAc...) asparagine glycosylation is present at Asn-476. The tract at residues Ile-559–Ile-669 is disordered. Over residues Thr-577 to Ala-599 the composition is skewed to polar residues. Acidic residues predominate over residues Leu-606–Glu-640. The helical transmembrane segment at Leu-716 to Ile-736 threads the bilayer. Topologically, residues Lys-737–Phe-775 are cytoplasmic. A phosphoserine mark is found at Ser-770 and Ser-771.

Interacts with IL6ST; this interaction prevents IL6ST protein homodimerization and bridges ARMH4 with IL6R and STAT3 and therefore inhibits phosphorylation of STAT3 at 'Tyr-705'. Interacts (via cytoplasmic tail) with RICTOR; this interaction bridges ARMH4 to the mTORC2 complex and inhibits the mTORC2 kinase activity. In terms of tissue distribution, expressed in bone-marroew cells.

It localises to the membrane. In terms of biological role, may modulate immune response and may play a role in inflammation. Down-modulates STAT3 signaling throught direct interaction with IL6ST, resulting in the inhibition of phosphorylation of STAT3 at 'Tyr-705'. May negatively regulates AKT signaling by modulating the activity of mTORC2 complex through RICTOR interaction. The protein is Armadillo-like helical domain-containing protein 4 of Mus musculus (Mouse).